A 68-amino-acid polypeptide reads, in one-letter code: Small ribosomal subunit protein bS21 (68 aa).

Residues 37 to 49 are compositionally biased toward basic and acidic residues; it reads EKPSEKRAREKAA. The disordered stretch occupies residues 37 to 68; it reads EKPSEKRAREKAAAVRRARKMERKRMERDGIK. Positions 50-59 are enriched in basic residues; the sequence is AVRRARKMER.

Belongs to the bacterial ribosomal protein bS21 family.

The polypeptide is Small ribosomal subunit protein bS21 (Erythrobacter litoralis (strain HTCC2594)).